The primary structure comprises 238 residues: MIYAGILAGGIGSRMGNVPLPKQFLLLQGKPIIIHTVEKFLMYKDFDEIIIATPQKWINYMHDLLNNYRLDDKKIKVIQGGDDRNHTIMNIIESIEQHKKLNDEDIIVTHDAVRPFLTNRIIRENVEYASQYGAVDTVVNAVDTIISSNDAQFISEIPIRSEMYQGQTPQTFKIKELKDSYLSLTQSQKEILTDACKILVELGKPVKLVKGELFNIKITTPYDLKVANSIITGAVDND.

CTP is bound by residues 7–10 (LAGG) and 81–87 (GDDRNHT).

The protein belongs to the IspD/TarI cytidylyltransferase family. TarI subfamily.

The catalysed reaction is D-ribitol 5-phosphate + CTP + H(+) = CDP-L-ribitol + diphosphate. It participates in cell wall biogenesis; poly(ribitol phosphate) teichoic acid biosynthesis. Functionally, catalyzes the transfer of the cytidylyl group of CTP to D-ribitol 5-phosphate. The polypeptide is Ribitol-5-phosphate cytidylyltransferase (Staphylococcus epidermidis (strain ATCC 35984 / DSM 28319 / BCRC 17069 / CCUG 31568 / BM 3577 / RP62A)).